We begin with the raw amino-acid sequence, 471 residues long: Glutamate--tRNA ligase (471 aa).

A 'HIGH' region motif is present at residues 9–19; that stretch reads PSPTGYLHVGG. Cysteine 98, cysteine 100, cysteine 125, and histidine 127 together coordinate Zn(2+). Positions 237 to 241 match the 'KMSKS' region motif; that stretch reads KLSKR. Lysine 240 is an ATP binding site.

This sequence belongs to the class-I aminoacyl-tRNA synthetase family. Glutamate--tRNA ligase type 1 subfamily. As to quaternary structure, monomer. The cofactor is Zn(2+).

Its subcellular location is the cytoplasm. The catalysed reaction is tRNA(Glu) + L-glutamate + ATP = L-glutamyl-tRNA(Glu) + AMP + diphosphate. In terms of biological role, catalyzes the attachment of glutamate to tRNA(Glu) in a two-step reaction: glutamate is first activated by ATP to form Glu-AMP and then transferred to the acceptor end of tRNA(Glu). The protein is Glutamate--tRNA ligase of Escherichia coli (strain SMS-3-5 / SECEC).